Reading from the N-terminus, the 359-residue chain is Double-stranded RNA-binding protein 3 (359 aa).

DRBM domains lie at 1–70 (MYKN…ALSS) and 87–155 (IYKN…SLRK). A compositionally biased stretch (basic and acidic residues) spans 266–280 (EKKQSLDDPKPEMRI). Disordered stretches follow at residues 266–292 (EKKQSLDDPKPEMRIKTSSPSPLSSSV) and 328–359 (APPPKPNPNPNSSPFITRELGNGSQEKKSLPN). The span at 328–338 (APPPKPNPNPN) shows a compositional bias: pro residues.

Functionally, binds double-stranded RNA. The sequence is that of Double-stranded RNA-binding protein 3 (DRB3) from Arabidopsis thaliana (Mouse-ear cress).